Here is a 170-residue protein sequence, read N- to C-terminus: Large ribosomal subunit protein bL17 (170 aa).

The span at 124–134 (AAEAPKAAKAA) shows a compositional bias: low complexity. A disordered region spans residues 124-170 (AAEAPKAAKAAPVKEAKPAAEEAPAKPKRTRKPKADEADAEAAKEEN). Basic and acidic residues-rich tracts occupy residues 135–148 (PVKE…EAPA) and 156–170 (PKAD…KEEN).

Belongs to the bacterial ribosomal protein bL17 family. Part of the 50S ribosomal subunit. Contacts protein L32.

The chain is Large ribosomal subunit protein bL17 from Desulfovibrio desulfuricans (strain ATCC 27774 / DSM 6949 / MB).